Consider the following 359-residue polypeptide: UDP-3-O-acylglucosamine N-acyltransferase (359 aa).

His-256 functions as the Proton acceptor in the catalytic mechanism.

It belongs to the transferase hexapeptide repeat family. LpxD subfamily. Homotrimer.

The catalysed reaction is a UDP-3-O-[(3R)-3-hydroxyacyl]-alpha-D-glucosamine + a (3R)-hydroxyacyl-[ACP] = a UDP-2-N,3-O-bis[(3R)-3-hydroxyacyl]-alpha-D-glucosamine + holo-[ACP] + H(+). Its pathway is bacterial outer membrane biogenesis; LPS lipid A biosynthesis. In terms of biological role, catalyzes the N-acylation of UDP-3-O-acylglucosamine using 3-hydroxyacyl-ACP as the acyl donor. Is involved in the biosynthesis of lipid A, a phosphorylated glycolipid that anchors the lipopolysaccharide to the outer membrane of the cell. The chain is UDP-3-O-acylglucosamine N-acyltransferase from Rhodopseudomonas palustris (strain HaA2).